A 634-amino-acid chain; its full sequence is DNA-directed RNA polymerase subunit gamma (634 aa).

Cysteine 74, cysteine 76, cysteine 89, and cysteine 92 together coordinate Zn(2+). The Mg(2+) site is built by aspartate 471, aspartate 473, and aspartate 475.

Belongs to the RNA polymerase beta' chain family. RpoC1 subfamily. In cyanobacteria the RNAP catalytic core is composed of 2 alpha, 1 beta, 1 beta', 1 gamma and 1 omega subunit. When a sigma factor is associated with the core the holoenzyme is formed, which can initiate transcription. Requires Mg(2+) as cofactor. Zn(2+) is required as a cofactor.

It carries out the reaction RNA(n) + a ribonucleoside 5'-triphosphate = RNA(n+1) + diphosphate. Functionally, DNA-dependent RNA polymerase catalyzes the transcription of DNA into RNA using the four ribonucleoside triphosphates as substrates. The chain is DNA-directed RNA polymerase subunit gamma from Prochlorococcus marinus subsp. pastoris (strain CCMP1986 / NIES-2087 / MED4).